Consider the following 452-residue polypeptide: MTAKPTIAFSHLGCEKNRIDTEHMIGLLAEAGYGIDANEALADVVVVNTCSFIQAAREESVRTLVELAESGKKIVIAGCLAQHFQDQLLAELPEAIALVGTGDYHRIVDVLQRTESGERVNAISQEPSFIADENLPRYRTTTSAVAYLRVAEGCDYRCAFCIIPHLRGKRRSRSIESIVAEAKQLAAEGVQELVLISQITTNYGLDRYGKPMLAELLRQLGQVDVPWIRIHYAYPTGLTPEVIAAIRETHNVLPYLDLPLQHSHPEILKAMNRPWQGNVNDRIIEKLKEALPDAVLRTTFIAGFPGETEEHFRHLQQFIQRHEFDHVGVFAFSPEEGTAAIDLPNPVPDDVKEARRDALMATQQPIAERRNRAQIGRLVDVLIEQEHPSTGLKIGRSARFAPEVDGVVYVQGDAALGQLVTVRITDADIYDLHGEVASAADLFQVSRQPSLA.

Residues 5–116 form the MTTase N-terminal domain; the sequence is PTIAFSHLGC…IVDVLQRTES (112 aa). Residues Cys14, Cys50, Cys79, Cys154, Cys158, and Cys161 each contribute to the [4Fe-4S] cluster site. In terms of domain architecture, Radical SAM core spans 140–369; sequence TTTSAVAYLR…MATQQPIAER (230 aa). Residues 372 to 438 enclose the TRAM domain; that stretch reads RAQIGRLVDV…IYDLHGEVAS (67 aa).

This sequence belongs to the methylthiotransferase family. RimO subfamily. Requires [4Fe-4S] cluster as cofactor.

It localises to the cytoplasm. It carries out the reaction L-aspartate(89)-[ribosomal protein uS12]-hydrogen + (sulfur carrier)-SH + AH2 + 2 S-adenosyl-L-methionine = 3-methylsulfanyl-L-aspartate(89)-[ribosomal protein uS12]-hydrogen + (sulfur carrier)-H + 5'-deoxyadenosine + L-methionine + A + S-adenosyl-L-homocysteine + 2 H(+). Catalyzes the methylthiolation of an aspartic acid residue of ribosomal protein uS12. The protein is Ribosomal protein uS12 methylthiotransferase RimO of Synechococcus sp. (strain ATCC 27144 / PCC 6301 / SAUG 1402/1) (Anacystis nidulans).